The primary structure comprises 126 residues: Holo-[acyl-carrier-protein] synthase (126 aa).

Positions 9 and 58 each coordinate Mg(2+).

This sequence belongs to the P-Pant transferase superfamily. AcpS family. Mg(2+) is required as a cofactor.

The protein localises to the cytoplasm. The enzyme catalyses apo-[ACP] + CoA = holo-[ACP] + adenosine 3',5'-bisphosphate + H(+). Functionally, transfers the 4'-phosphopantetheine moiety from coenzyme A to a Ser of acyl-carrier-protein. This Yersinia pestis bv. Antiqua (strain Angola) protein is Holo-[acyl-carrier-protein] synthase.